We begin with the raw amino-acid sequence, 145 residues long: 3-dehydroquinate dehydratase (145 aa).

The Proton acceptor role is filled by tyrosine 22. Residues asparagine 71, histidine 77, and aspartate 84 each contribute to the substrate site. Histidine 97 (proton donor) is an active-site residue. Residues 98–99 and arginine 108 contribute to the substrate site; that span reads IS.

The protein belongs to the type-II 3-dehydroquinase family. In terms of assembly, homododecamer.

The enzyme catalyses 3-dehydroquinate = 3-dehydroshikimate + H2O. Its pathway is metabolic intermediate biosynthesis; chorismate biosynthesis; chorismate from D-erythrose 4-phosphate and phosphoenolpyruvate: step 3/7. Functionally, catalyzes a trans-dehydration via an enolate intermediate. The protein is 3-dehydroquinate dehydratase of Exiguobacterium sp. (strain ATCC BAA-1283 / AT1b).